The sequence spans 320 residues: 4-diphosphocytidyl-2-C-methyl-D-erythritol kinase (320 aa).

Lys-26 is a catalytic residue. An ATP-binding site is contributed by 111–121; the sequence is PVAGGMAGGSA. Residue Asp-153 is part of the active site.

The protein belongs to the GHMP kinase family. IspE subfamily.

The enzyme catalyses 4-CDP-2-C-methyl-D-erythritol + ATP = 4-CDP-2-C-methyl-D-erythritol 2-phosphate + ADP + H(+). Its pathway is isoprenoid biosynthesis; isopentenyl diphosphate biosynthesis via DXP pathway; isopentenyl diphosphate from 1-deoxy-D-xylulose 5-phosphate: step 3/6. In terms of biological role, catalyzes the phosphorylation of the position 2 hydroxy group of 4-diphosphocytidyl-2C-methyl-D-erythritol. In Mycobacterium marinum (strain ATCC BAA-535 / M), this protein is 4-diphosphocytidyl-2-C-methyl-D-erythritol kinase.